We begin with the raw amino-acid sequence, 298 residues long: Acetylglutamate kinase (298 aa).

Substrate is bound by residues 73 to 74 (GG), arginine 95, and asparagine 188.

Belongs to the acetylglutamate kinase family. ArgB subfamily.

Its subcellular location is the cytoplasm. It catalyses the reaction N-acetyl-L-glutamate + ATP = N-acetyl-L-glutamyl 5-phosphate + ADP. It functions in the pathway amino-acid biosynthesis; L-arginine biosynthesis; N(2)-acetyl-L-ornithine from L-glutamate: step 2/4. Its function is as follows. Catalyzes the ATP-dependent phosphorylation of N-acetyl-L-glutamate. In Nostoc punctiforme (strain ATCC 29133 / PCC 73102), this protein is Acetylglutamate kinase.